Here is a 509-residue protein sequence, read N- to C-terminus: MSTRAGRRVAISAGSLAVLLGALDTYVVVTIMRDIMHDVGIPVNQMQRITWIVTMYLLGYIAAMPLLSRASDRFGRKLLLQVSLAGFAIGSVMTALAGQFGDFHMLIAGRTIQGVASGALLPITLALGADLWAQRNRAGVLGGIGAAQELGSVLGPLYGIFIVWLFSDWRYVFWINIPLTAIAMLMIQVSLSAHDRGDELEKVDVVGGVLLAIALGLVVIGLYNPQPDSKQVLPSYGVPVLVGGIVATVAFAVWERCARTRLIDPAGVHIRPFLSALGASVAAGAALMVTLVNVELFGQGVLGMDQTQAAGLLVWFLIALPIGAVLGGWGATKAGDRTMTFVGLLITAGGYWLISHWPVDLLNYRRSIFGLFSVPTMYADLLVAGLGLGLVIGPLSSATLRVVPTAQHGIASAAVVVARMTGMLIGVAALTAWGLYRFNQILAGLSTAVPPDATLIERAAAVADQAKRAYTMMYSDIFMITAIVCVIGALLGLLISSRKEHASEPKVPE.

The next 13 helical transmembrane spans lie at 48–68, 78–98, 112–132, 146–166, 171–191, 203–223, 232–252, 272–292, 309–329, 339–359, 381–403, 410–430, and 477–497; these read RITW…PLLS, LLLQ…ALAG, IQGV…ADLW, AAQE…VWLF, YVFW…QVSL, VDVV…IGLY, VLPS…VAFA, PFLS…VTLV, AAGL…LGGW, MTFV…HWPV, LLVA…LRVV, IASA…VAAL, and IFMI…LISS.

Belongs to the major facilitator superfamily.

The protein resides in the cell inner membrane. In terms of biological role, in association with lipoprotein LprG probably transports triacylglycerides (TAG) across the inner cell membrane into the periplasm; TAG probably regulates lipid metabolism and growth regulation. May be an efflux transporter and involved in maintaining correct cell wall permeability. Probably required with LprG for normal surface localization of lipoarabinomannan (LAM). The polypeptide is Probable triacylglyceride transporter ML0556 (Mycobacterium leprae (strain TN)).